A 329-amino-acid polypeptide reads, in one-letter code: tRNA N6-adenosine threonylcarbamoyltransferase (329 aa).

Residues His-107 and His-111 each contribute to the Fe cation site. Substrate is bound by residues 129-133 (LVSGG), Asp-162, Gly-175, and Asn-268. A Fe cation-binding site is contributed by Asp-296.

This sequence belongs to the KAE1 / TsaD family. Requires Fe(2+) as cofactor.

The protein resides in the cytoplasm. It catalyses the reaction L-threonylcarbamoyladenylate + adenosine(37) in tRNA = N(6)-L-threonylcarbamoyladenosine(37) in tRNA + AMP + H(+). In terms of biological role, required for the formation of a threonylcarbamoyl group on adenosine at position 37 (t(6)A37) in tRNAs that read codons beginning with adenine. Is involved in the transfer of the threonylcarbamoyl moiety of threonylcarbamoyl-AMP (TC-AMP) to the N6 group of A37, together with TsaE and TsaB. TsaD likely plays a direct catalytic role in this reaction. This chain is tRNA N6-adenosine threonylcarbamoyltransferase, found in Nitratiruptor sp. (strain SB155-2).